A 379-amino-acid polypeptide reads, in one-letter code: Leukocyte elastase inhibitor A (379 aa).

Serine 300 is subject to Phosphoserine.

Belongs to the serpin family. Ov-serpin subfamily. In terms of assembly, monomer.

Its subcellular location is the secreted. It localises to the cytoplasm. It is found in the cytolytic granule. The protein localises to the early endosome. Its function is as follows. Regulates the activity of the neutrophil proteases. The sequence is that of Leukocyte elastase inhibitor A (Serpinb1a) from Rattus norvegicus (Rat).